The sequence spans 507 residues: Nuclear poly(A) polymerase 3 (507 aa).

ATP contacts are provided by residues 79–81 (YGS), 91–94 (SDID), D147, K208, Y217, and 226–227 (GV). Mg(2+)-binding residues include D92, D94, and D147.

The protein belongs to the poly(A) polymerase family. As to quaternary structure, monomer. Forms a complex with cleavage and polyadenylation specificity factor (CPSF) subunits FIPS5 and CPSF30. It depends on Mg(2+) as a cofactor. Requires Mn(2+) as cofactor. As to expression, expressed in leaves (mostly in petioles and tips), cotyledon, roots (tips, vascular tissue of the radicle, and throughout the root tissue excluding the elongation zone), stems, and flowers (restricted to the stigma and the pollen in mature anthers). Active in the primary and secondary root systems.

It is found in the nucleus. It catalyses the reaction RNA(n) + ATP = RNA(n)-3'-adenine ribonucleotide + diphosphate. Its function is as follows. Essential protein. Polymerase that creates the 3'-poly(A) tail of mRNA's. Also required for the endoribonucleolytic cleavage reaction at some polyadenylation sites. May acquire specificity through interaction with a cleavage and polyadenylation specificity factor (CPSF) at its C-terminus. This Arabidopsis thaliana (Mouse-ear cress) protein is Nuclear poly(A) polymerase 3.